A 383-amino-acid chain; its full sequence is Succinyl-diaminopimelate desuccinylase (383 aa).

Zn(2+) is bound at residue H74. D76 is an active-site residue. D107 contributes to the Zn(2+) binding site. The active-site Proton acceptor is the E141. E142, E170, and H356 together coordinate Zn(2+).

It belongs to the peptidase M20A family. DapE subfamily. As to quaternary structure, homodimer. The cofactor is Zn(2+). Co(2+) serves as cofactor.

The enzyme catalyses N-succinyl-(2S,6S)-2,6-diaminopimelate + H2O = (2S,6S)-2,6-diaminopimelate + succinate. Its pathway is amino-acid biosynthesis; L-lysine biosynthesis via DAP pathway; LL-2,6-diaminopimelate from (S)-tetrahydrodipicolinate (succinylase route): step 3/3. Functionally, catalyzes the hydrolysis of N-succinyl-L,L-diaminopimelic acid (SDAP), forming succinate and LL-2,6-diaminopimelate (DAP), an intermediate involved in the bacterial biosynthesis of lysine and meso-diaminopimelic acid, an essential component of bacterial cell walls. The polypeptide is Succinyl-diaminopimelate desuccinylase (Cupriavidus pinatubonensis (strain JMP 134 / LMG 1197) (Cupriavidus necator (strain JMP 134))).